The following is a 31-amino-acid chain: Kallikrein-1 (31 aa).

Positions 1–31 (VIGGQECARDSHPWQAAVYHFSDIECGGVLV) constitute a Peptidase S1 domain.

This sequence belongs to the peptidase S1 family. Kallikrein subfamily.

It carries out the reaction Preferential cleavage of Arg-|-Xaa bonds in small molecule substrates. Highly selective action to release kallidin (lysyl-bradykinin) from kininogen involves hydrolysis of Met-|-Xaa or Leu-|-Xaa.. Its function is as follows. Glandular kallikreins cleave Met-Lys and Arg-Ser bonds in kininogen to release Lys-bradykinin. The sequence is that of Kallikrein-1 from Cavia porcellus (Guinea pig).